We begin with the raw amino-acid sequence, 161 residues long: MSNSSKKHLDLPYRPGVGMMILNADNHIFVGKRIDTKISAWQMPQGGIVPGETPSIAAMREMLEEIGSDKGYIIAESKFWYSYDVPSFLIPKLWNGNFRGQKQRWFLIRFTGNNEDININTSNPEFDQWRWASLDELLSIIIPFKRKLYQAVVKEFESLIQ.

Positions proline 12–lysine 154 constitute a Nudix hydrolase domain. Residues glycine 46–glycine 67 carry the Nudix box motif.

This sequence belongs to the Nudix hydrolase family. RppH subfamily. A divalent metal cation serves as cofactor.

In terms of biological role, accelerates the degradation of transcripts by removing pyrophosphate from the 5'-end of triphosphorylated RNA, leading to a more labile monophosphorylated state that can stimulate subsequent ribonuclease cleavage. The protein is RNA pyrophosphohydrolase of Rickettsia peacockii (strain Rustic).